Consider the following 636-residue polypeptide: 1-deoxy-D-xylulose-5-phosphate synthase (636 aa).

Thiamine diphosphate contacts are provided by residues His72 and 113–115; that span reads GHA. Position 144 (Asp144) interacts with Mg(2+). Thiamine diphosphate-binding positions include 145–146, Asn174, Tyr287, and Glu370; that span reads GA. Mg(2+) is bound at residue Asn174.

Belongs to the transketolase family. DXPS subfamily. As to quaternary structure, homodimer. Requires Mg(2+) as cofactor. It depends on thiamine diphosphate as a cofactor.

The enzyme catalyses D-glyceraldehyde 3-phosphate + pyruvate + H(+) = 1-deoxy-D-xylulose 5-phosphate + CO2. It participates in metabolic intermediate biosynthesis; 1-deoxy-D-xylulose 5-phosphate biosynthesis; 1-deoxy-D-xylulose 5-phosphate from D-glyceraldehyde 3-phosphate and pyruvate: step 1/1. Its function is as follows. Catalyzes the acyloin condensation reaction between C atoms 2 and 3 of pyruvate and glyceraldehyde 3-phosphate to yield 1-deoxy-D-xylulose-5-phosphate (DXP). The polypeptide is 1-deoxy-D-xylulose-5-phosphate synthase (Microcystis aeruginosa (strain NIES-843 / IAM M-2473)).